Consider the following 601-residue polypeptide: Glutathione-regulated potassium-efflux system protein KefB (601 aa).

The next 13 helical transmembrane spans lie at 4 to 24, 29 to 49, 55 to 75, 87 to 107, 115 to 135, 152 to 172, 177 to 197, 207 to 227, 230 to 250, 268 to 288, 291 to 311, 324 to 344, and 356 to 376; these read SDFLLAGVLFLFAAVAAVPLA, IGAVLGYLLAGIAIGPWGLGF, EILHFSELGVVFLMFIIGLEL, IFGVGAAQVLLSAALLAGLLM, AAVVGGIGLAMSSTAMALQLM, VLLFQDLAVIPALALVPLLAG, HFDWMKIGMKVLAFVGMLIGG, FIAASGVREVFTAATLLLVLG, LFMDALGLSMALGTFIAGVLL, GLLLGLFFISVGMSLNLGVLY, LLWVVISVVVLVAVKIFVLYL, MQFAGVLSQGGEFAFVLFSSA, and ALLLVTVTLSMMTTPLLMKLV. Residues 400-519 form the RCK N-terminal domain; the sequence is KPQVIVVGFG…AGVTQFSRET (120 aa).

This sequence belongs to the monovalent cation:proton antiporter 2 (CPA2) transporter (TC 2.A.37) family. KefB subfamily. Interacts with the regulatory subunit KefG.

It localises to the cell inner membrane. Its function is as follows. Pore-forming subunit of a potassium efflux system that confers protection against electrophiles. Catalyzes K(+)/H(+) antiport. The polypeptide is Glutathione-regulated potassium-efflux system protein KefB (Escherichia coli O127:H6 (strain E2348/69 / EPEC)).